A 228-amino-acid polypeptide reads, in one-letter code: HTH-type transcriptional regulator TfdT (228 aa).

Residues 1 to 58 (MEIRQLKYFVAVAEAGGFGTAAQRMHISQPPLTRQIQALERDIGAKLFERTARGVELT) form the HTH lysR-type domain. Positions 18–37 (FGTAAQRMHISQPPLTRQIQ) form a DNA-binding region, H-T-H motif.

The protein belongs to the LysR transcriptional regulatory family.

It is found in the cytoplasm. In terms of biological role, does not seem to be involved in the regulation of 3-chlorocatechol degradation. Does not activate the expression of its presumed target operon, tfdCDEF. In Cupriavidus pinatubonensis (strain JMP 134 / LMG 1197) (Cupriavidus necator (strain JMP 134)), this protein is HTH-type transcriptional regulator TfdT (tfdT).